Reading from the N-terminus, the 781-residue chain is Coiled-coil and C2 domain-containing protein 1-like (781 aa).

Disordered regions lie at residues 32-63 (MGRV…NVPG), 94-134 (ELNG…APNS), 187-296 (ESEI…AKES), 313-373 (CSAD…TEGN), and 403-447 (GELP…VEGK). Residues 37-59 (RPAAPARGAPPAARGRPAPAAPA) are compositionally biased toward low complexity. The span at 98 to 107 (LVGGGGGGGA) shows a compositional bias: gly residues. Positions 108-118 (APTVPTRAAPR) are enriched in low complexity. Composition is skewed to pro residues over residues 119–129 (APGPSGPPPSA) and 204–222 (PLPP…PAPP). Residues 244–256 (APAPTAAAPPATK) show a composition bias toward low complexity. Basic residues predominate over residues 269-280 (ILHHRRDLHKQN). Residues 285 to 296 (IADKDKESAKES) show a composition bias toward basic and acidic residues. A compositionally biased stretch (pro residues) spans 324–341 (PPSPPPYRKPAPPQPQAP). Residues 363-373 (KMAEKAKTEGN) are compositionally biased toward basic and acidic residues. The region spanning 605–741 (YEMRQIPSAD…EHSAEMEESL (137 aa)) is the C2 domain.

It belongs to the CC2D1 family.

The protein is Coiled-coil and C2 domain-containing protein 1-like of Caenorhabditis elegans.